An 862-amino-acid chain; its full sequence is Squamosa promoter-binding-like protein 1 (862 aa).

The interval 55-98 (KRRRVSPEDDDGEECINAATTNGDDGQISGQRGRSSEDEMPRQG) is disordered. Residues 72–87 (AATTNGDDGQISGQRG) are compositionally biased toward polar residues. The SBP-type zinc-finger motif lies at 104–181 (GPCCQVDGCT…AQHNRRRRKV (78 aa)). Zn(2+) is bound by residues cysteine 107, cysteine 112, cysteine 129, histidine 132, cysteine 148, cysteine 151, histidine 155, and cysteine 167. Positions 164–180 (KKSCRSRLAQHNRRRRK) match the Bipartite nuclear localization signal motif.

Ubiquitous.

It is found in the nucleus. Its function is as follows. Trans-acting factor that binds specifically to the consensus nucleotide sequence 5'-TNCGTACAA-3'. The chain is Squamosa promoter-binding-like protein 1 (SPL1) from Oryza sativa subsp. japonica (Rice).